We begin with the raw amino-acid sequence, 252 residues long: Zinc finger protein 511 (252 aa).

3 C2H2-type zinc fingers span residues 80-105 (FACQVAGCCQVFDALDDYEHHYHTLH), 107-130 (NVCSFCKRAFPSGHLLDAHILEWH), and 144-169 (YQCLVEGCTEKFKTSRDRKDHMVRMH). Residues 177 to 221 (FDKPKKSRSPASAEAPGDSGERSEGEAMEICSEPVAASPAPAGER) form a disordered region. Residue arginine 240 is modified to Omega-N-methylarginine.

The protein belongs to the krueppel C2H2-type zinc-finger protein family.

It is found in the nucleus. Functionally, may be involved in transcriptional regulation. This chain is Zinc finger protein 511, found in Homo sapiens (Human).